Consider the following 313-residue polypeptide: HPr kinase/phosphorylase (313 aa).

Active-site residues include histidine 136 and lysine 157. 151-158 (GDSGIGKS) serves as a coordination point for ATP. Serine 158 provides a ligand contact to Mg(2+). Residue aspartate 175 is the Proton acceptor; for phosphorylation activity. Proton donor; for dephosphorylation activity of the active site. The tract at residues 199-208 (LEIRGLGIIN) is important for the catalytic mechanism of both phosphorylation and dephosphorylation. Residue glutamate 200 participates in Mg(2+) binding. The active site involves arginine 241. The interval 262 to 267 (PVRPGR) is important for the catalytic mechanism of dephosphorylation.

It belongs to the HPrK/P family. As to quaternary structure, homohexamer. The cofactor is Mg(2+).

The enzyme catalyses [HPr protein]-L-serine + ATP = [HPr protein]-O-phospho-L-serine + ADP + H(+). The catalysed reaction is [HPr protein]-O-phospho-L-serine + phosphate + H(+) = [HPr protein]-L-serine + diphosphate. Functionally, catalyzes the ATP- as well as the pyrophosphate-dependent phosphorylation of a specific serine residue in HPr, a phosphocarrier protein of the phosphoenolpyruvate-dependent sugar phosphotransferase system (PTS). HprK/P also catalyzes the pyrophosphate-producing, inorganic phosphate-dependent dephosphorylation (phosphorolysis) of seryl-phosphorylated HPr (P-Ser-HPr). The two antagonistic activities of HprK/P are regulated by several intracellular metabolites, which change their concentration in response to the absence or presence of rapidly metabolisable carbon sources (glucose, fructose, etc.) in the growth medium. Therefore, by controlling the phosphorylation state of HPr, HPrK/P is a sensor enzyme that plays a major role in the regulation of carbon metabolism and sugar transport: it mediates carbon catabolite repression (CCR), and regulates PTS-catalyzed carbohydrate uptake and inducer exclusion. The chain is HPr kinase/phosphorylase from Staphylococcus saprophyticus subsp. saprophyticus (strain ATCC 15305 / DSM 20229 / NCIMB 8711 / NCTC 7292 / S-41).